The following is a 1187-amino-acid chain: DNA-directed RNA polymerase subunit beta (1187 aa).

Belongs to the RNA polymerase beta chain family. The RNAP catalytic core consists of 2 alpha, 1 beta, 1 beta' and 1 omega subunit. When a sigma factor is associated with the core the holoenzyme is formed, which can initiate transcription.

It carries out the reaction RNA(n) + a ribonucleoside 5'-triphosphate = RNA(n+1) + diphosphate. Its function is as follows. DNA-dependent RNA polymerase catalyzes the transcription of DNA into RNA using the four ribonucleoside triphosphates as substrates. The protein is DNA-directed RNA polymerase subunit beta of Petrotoga mobilis (strain DSM 10674 / SJ95).